The primary structure comprises 530 residues: MATKLESSLIFALLSKCSVLSQTNLAFSLLAVTIIWLAISLFLWTYPGGPAWGKYLFGRLISGSYKTGNVIPGPKGFPLVGSMSLMSSTLAHRRIADAAEKFGAKRLMAFSLGETRVIVTCNPDVAKEILNSPVFADRPVKESAYSLMFNRAIGFAPHGVYWRTLRRIASNHLFSTKQIRRAETQRRVISSQMVEFLEKQSSNEPCFVRELLKTASLNNMMCSVFGQEYELEKNHVELREMVEEGYDLLGTLNWTDHLPWLSEFDPQRLRSRCSTLVPKVNRFVSRIISEHRNQTGDLPRDFVDVLLSLHGSDKLSDPDIIAVLWEMIFRGTDTVAVLIEWILARMVLHPDMQSTVQNELDQVVGKSRALDESDLASLPYLTAVVKEVLRLHPPGPLLSWARLAITDTIVDGRLVPAGTTAMVNMWAVSHDPHVWVDPLEFKPERFVAKEGEVEFSVLGSDLRLAPFGSGRRICPGKNLGFTTVMFWTAMMLHEFEWGPSDGNGVDLSEKLRLSCEMANPLPAKLRRRRS.

Residues 25–45 (LAFSLLAVTIIWLAISLFLWT) traverse the membrane as a helical segment. Heme is bound at residue Cys-474.

It belongs to the cytochrome P450 family. The cofactor is heme. Expressed in leaves, sepals, petals, stamens, carpels and developing ovules.

It is found in the membrane. Functionally, plays a role in seed and fruit development. Functions probably in association with CYP78A9 in the regulation of seed growth. Acts maternally to promote seed growth. The sequence is that of Cytochrome P450 78A6 (CYP78A6) from Arabidopsis thaliana (Mouse-ear cress).